We begin with the raw amino-acid sequence, 51 residues long: Epididymal sperm protein E (51 aa).

The segment at 8–39 (CVRCRRKTPSFNSKTVTFRNKRRAIRSHCAYC) is a zinc-finger region.

Sperm.

The protein localises to the nucleus. This is Epididymal sperm protein E from Sepia officinalis (Common cuttlefish).